Reading from the N-terminus, the 525-residue chain is MPTSAAVQTDDSLASPFDWPGRPHAAPGFARLGERFLTRLPPVPMPAAPYLVGFSPEAAAPLGLSRAGLDTPAGLDVFVGNAIAAWSDPLATVYSGHQFGVWAGQLGDGRALLLAELQTADGPCEVQLKGAGLTPYSRMGDGRAVLRSSIREFLCSEAMAGLGIPTTRALCVIGADAPVRRETIETAAVVTRLAPSFVRFGHFEHFAANEKLPELRALADFVIDRFYPACRAEPQPYLALLREVGRRTAALIAQWQAVGFCHGVMNTDNMSILGLTLDYGPFGFLDGFDANHICNHSDTGGRYAYAQQPQIAYWNLFCLAQALLPLCGSDPTAFTDLSDEAQAQPAIDAAQEALLVYRDTYGEAFYARYRAKLGLTQAHDGDEALFGDLFKLLHTQRADYTLFFRHLADVRRDDTPAQAQARTVRDVFFDRDSADAWLAAYRQRLQTEPAPDAARAEAMRRVNPKYVLRNHLAEIAIRRAGEKDFSEVENLRAVLARPFDDHPGFEHYAGPAPDWAASLEVSCSS.

Residues glycine 107, glycine 109, arginine 110, lysine 129, aspartate 141, glycine 142, arginine 192, and arginine 199 each coordinate ATP. Aspartate 268 serves as the catalytic Proton acceptor. Mg(2+) is bound by residues asparagine 269 and aspartate 278. Position 278 (aspartate 278) interacts with ATP.

It belongs to the SELO family. It depends on Mg(2+) as a cofactor. Requires Mn(2+) as cofactor.

The catalysed reaction is L-seryl-[protein] + ATP = 3-O-(5'-adenylyl)-L-seryl-[protein] + diphosphate. It carries out the reaction L-threonyl-[protein] + ATP = 3-O-(5'-adenylyl)-L-threonyl-[protein] + diphosphate. It catalyses the reaction L-tyrosyl-[protein] + ATP = O-(5'-adenylyl)-L-tyrosyl-[protein] + diphosphate. The enzyme catalyses L-histidyl-[protein] + UTP = N(tele)-(5'-uridylyl)-L-histidyl-[protein] + diphosphate. The catalysed reaction is L-seryl-[protein] + UTP = O-(5'-uridylyl)-L-seryl-[protein] + diphosphate. It carries out the reaction L-tyrosyl-[protein] + UTP = O-(5'-uridylyl)-L-tyrosyl-[protein] + diphosphate. Its function is as follows. Nucleotidyltransferase involved in the post-translational modification of proteins. It can catalyze the addition of adenosine monophosphate (AMP) or uridine monophosphate (UMP) to a protein, resulting in modifications known as AMPylation and UMPylation. The protein is Protein nucleotidyltransferase YdiU of Ralstonia nicotianae (strain ATCC BAA-1114 / GMI1000) (Ralstonia solanacearum).